The primary structure comprises 211 residues: Endonuclease III (211 aa).

The HhH domain occupies 108–127 (RAALEALPGVGRKTANVVLN). The [4Fe-4S] cluster site is built by cysteine 187, cysteine 194, cysteine 197, and cysteine 203.

Belongs to the Nth/MutY family. It depends on [4Fe-4S] cluster as a cofactor.

It catalyses the reaction 2'-deoxyribonucleotide-(2'-deoxyribose 5'-phosphate)-2'-deoxyribonucleotide-DNA = a 3'-end 2'-deoxyribonucleotide-(2,3-dehydro-2,3-deoxyribose 5'-phosphate)-DNA + a 5'-end 5'-phospho-2'-deoxyribonucleoside-DNA + H(+). Its function is as follows. DNA repair enzyme that has both DNA N-glycosylase activity and AP-lyase activity. The DNA N-glycosylase activity releases various damaged pyrimidines from DNA by cleaving the N-glycosidic bond, leaving an AP (apurinic/apyrimidinic) site. The AP-lyase activity cleaves the phosphodiester bond 3' to the AP site by a beta-elimination, leaving a 3'-terminal unsaturated sugar and a product with a terminal 5'-phosphate. The chain is Endonuclease III from Escherichia coli O6:H1 (strain CFT073 / ATCC 700928 / UPEC).